We begin with the raw amino-acid sequence, 106 residues long: Iron-sulfur cluster assembly protein CyaY (106 aa).

This sequence belongs to the frataxin family.

In terms of biological role, involved in iron-sulfur (Fe-S) cluster assembly. May act as a regulator of Fe-S biogenesis. The polypeptide is Iron-sulfur cluster assembly protein CyaY (Escherichia coli O6:H1 (strain CFT073 / ATCC 700928 / UPEC)).